Reading from the N-terminus, the 277-residue chain is Undecaprenyl-diphosphatase (277 aa).

The next 6 helical transmembrane spans lie at 47-67, 85-105, 108-128, 183-203, 218-238, and 249-269; these read FNII…RGKI, VNLL…ADLI, WLFN…IMLW, AATE…AVYS, VFAV…RALL, and FAWY…FHLI.

Belongs to the UppP family.

It localises to the cell inner membrane. The enzyme catalyses di-trans,octa-cis-undecaprenyl diphosphate + H2O = di-trans,octa-cis-undecaprenyl phosphate + phosphate + H(+). Catalyzes the dephosphorylation of undecaprenyl diphosphate (UPP). Confers resistance to bacitracin. This chain is Undecaprenyl-diphosphatase, found in Pseudomonas paraeruginosa (strain DSM 24068 / PA7) (Pseudomonas aeruginosa (strain PA7)).